Here is a 106-residue protein sequence, read N- to C-terminus: 3-oxoacyl-[acyl-carrier-protein] reductase (106 aa).

The protein belongs to the short-chain dehydrogenases/reductases (SDR) family. In terms of assembly, homotetramer. Mesocarp.

The protein resides in the plastid. Its subcellular location is the chloroplast. It catalyses the reaction a (3R)-hydroxyacyl-[ACP] + NADP(+) = a 3-oxoacyl-[ACP] + NADPH + H(+). Its pathway is lipid metabolism; fatty acid biosynthesis. The sequence is that of 3-oxoacyl-[acyl-carrier-protein] reductase from Persea americana (Avocado).